A 365-amino-acid polypeptide reads, in one-letter code: Phosphoserine aminotransferase (365 aa).

An L-glutamate-binding site is contributed by Arg42. Pyridoxal 5'-phosphate is bound by residues 76-77 (AR), Trp103, Thr154, Asp175, and Gln198. Lys199 bears the N6-(pyridoxal phosphate)lysine mark. A pyridoxal 5'-phosphate-binding site is contributed by 242 to 243 (NT).

The protein belongs to the class-V pyridoxal-phosphate-dependent aminotransferase family. SerC subfamily. Homodimer. Requires pyridoxal 5'-phosphate as cofactor.

It localises to the cytoplasm. It carries out the reaction O-phospho-L-serine + 2-oxoglutarate = 3-phosphooxypyruvate + L-glutamate. The catalysed reaction is 4-(phosphooxy)-L-threonine + 2-oxoglutarate = (R)-3-hydroxy-2-oxo-4-phosphooxybutanoate + L-glutamate. The protein operates within amino-acid biosynthesis; L-serine biosynthesis; L-serine from 3-phospho-D-glycerate: step 2/3. It functions in the pathway cofactor biosynthesis; pyridoxine 5'-phosphate biosynthesis; pyridoxine 5'-phosphate from D-erythrose 4-phosphate: step 3/5. Functionally, catalyzes the reversible conversion of 3-phosphohydroxypyruvate to phosphoserine and of 3-hydroxy-2-oxo-4-phosphonooxybutanoate to phosphohydroxythreonine. This is Phosphoserine aminotransferase from Blochmanniella floridana.